Here is a 360-residue protein sequence, read N- to C-terminus: Protein Wnt-2 (360 aa).

The signal sequence occupies residues 1 to 26 (MNSSSLFGIWLSVPLILSWVTPQVSS). Cystine bridges form between Cys76–Cys87, Cys127–Cys135, Cys137–Cys157, Cys206–Cys220, Cys208–Cys215, Cys278–Cys309, Cys294–Cys304, Cys308–Cys348, Cys324–Cys339, Cys326–Cys336, and Cys331–Cys332. Ser212 carries O-palmitoleoyl serine; by PORCN lipidation. N-linked (GlcNAc...) asparagine glycosylation is present at Asn295.

Belongs to the Wnt family. Palmitoleoylation is required for efficient binding to frizzled receptors. Depalmitoleoylation leads to Wnt signaling pathway inhibition.

It is found in the secreted. The protein localises to the extracellular space. The protein resides in the extracellular matrix. Functionally, ligand for members of the frizzled family of seven transmembrane receptors. Functions in the canonical Wnt signaling pathway that results in activation of transcription factors of the TCF/LEF family. Functions as a upstream regulator of FGF10 expression. Plays an important role in embryonic lung development. May contribute to embryonic brain development by regulating the proliferation of dopaminergic precursors and neurons. This is Protein Wnt-2 (WNT2) from Monodelphis domestica (Gray short-tailed opossum).